A 431-amino-acid polypeptide reads, in one-letter code: Glutamate-1-semialdehyde 2,1-aminomutase (431 aa).

The residue at position 265 (lysine 265) is an N6-(pyridoxal phosphate)lysine.

Belongs to the class-III pyridoxal-phosphate-dependent aminotransferase family. HemL subfamily. As to quaternary structure, homodimer. It depends on pyridoxal 5'-phosphate as a cofactor.

The protein localises to the cytoplasm. The catalysed reaction is (S)-4-amino-5-oxopentanoate = 5-aminolevulinate. It participates in porphyrin-containing compound metabolism; protoporphyrin-IX biosynthesis; 5-aminolevulinate from L-glutamyl-tRNA(Glu): step 2/2. The chain is Glutamate-1-semialdehyde 2,1-aminomutase from Aliivibrio fischeri (strain ATCC 700601 / ES114) (Vibrio fischeri).